The sequence spans 232 residues: Phosphate import ATP-binding protein PstB (232 aa).

The ABC transporter domain maps to 1-227 (MFNINMEIKE…PKDRRTENYI (227 aa)). ATP is bound at residue 18 to 25 (GPSGCGKT).

It belongs to the ABC transporter superfamily. Phosphate importer (TC 3.A.1.7) family. As to quaternary structure, the complex is composed of two ATP-binding proteins (PstB), two transmembrane proteins (PstC and PstA) and a solute-binding protein (PstS).

It is found in the cell membrane. It catalyses the reaction phosphate(out) + ATP + H2O = ADP + 2 phosphate(in) + H(+). Its function is as follows. Part of the ABC transporter complex PstSACB involved in phosphate import. Responsible for energy coupling to the transport system. In Mycoplasma mycoides subsp. mycoides SC (strain CCUG 32753 / NCTC 10114 / PG1), this protein is Phosphate import ATP-binding protein PstB.